A 449-amino-acid polypeptide reads, in one-letter code: UDP-N-acetylmuramoylalanine--D-glutamate ligase (449 aa).

116–122 contributes to the ATP binding site; that stretch reads GSNGKST.

Belongs to the MurCDEF family.

The protein localises to the cytoplasm. It catalyses the reaction UDP-N-acetyl-alpha-D-muramoyl-L-alanine + D-glutamate + ATP = UDP-N-acetyl-alpha-D-muramoyl-L-alanyl-D-glutamate + ADP + phosphate + H(+). It participates in cell wall biogenesis; peptidoglycan biosynthesis. In terms of biological role, cell wall formation. Catalyzes the addition of glutamate to the nucleotide precursor UDP-N-acetylmuramoyl-L-alanine (UMA). The sequence is that of UDP-N-acetylmuramoylalanine--D-glutamate ligase from Shewanella violacea (strain JCM 10179 / CIP 106290 / LMG 19151 / DSS12).